Consider the following 121-residue polypeptide: Large ribosomal subunit protein uL14 (121 aa).

It belongs to the universal ribosomal protein uL14 family. As to quaternary structure, part of the 50S ribosomal subunit. Forms a cluster with proteins L3 and L19. In the 70S ribosome, L14 and L19 interact and together make contacts with the 16S rRNA in bridges B5 and B8.

In terms of biological role, binds to 23S rRNA. Forms part of two intersubunit bridges in the 70S ribosome. The chain is Large ribosomal subunit protein uL14 from Porphyromonas gingivalis (strain ATCC 33277 / DSM 20709 / CIP 103683 / JCM 12257 / NCTC 11834 / 2561).